The chain runs to 230 residues: Ribonuclease 3 (230 aa).

Residues 5 to 127 enclose the RNase III domain; that stretch reads HEHLARKLGI…ILGAVLRDQG (123 aa). Mg(2+) is bound at residue E40. The active site involves D44. Mg(2+) contacts are provided by D113 and E116. E116 is a catalytic residue. In terms of domain architecture, DRBM spans 154-224; the sequence is DPKTRLQELM…AENMLSRLSD (71 aa). The tract at residues 202-230 is disordered; sequence GEGSSRKKAEQQAAENMLSRLSDQSRFRV.

Belongs to the ribonuclease III family. Homodimer. Mg(2+) serves as cofactor.

Its subcellular location is the cytoplasm. It catalyses the reaction Endonucleolytic cleavage to 5'-phosphomonoester.. Functionally, digests double-stranded RNA. Involved in the processing of primary rRNA transcript to yield the immediate precursors to the large and small rRNAs (23S and 16S). Processes some mRNAs, and tRNAs when they are encoded in the rRNA operon. Processes pre-crRNA and tracrRNA of type II CRISPR loci if present in the organism. In Methylococcus capsulatus (strain ATCC 33009 / NCIMB 11132 / Bath), this protein is Ribonuclease 3.